Here is a 178-residue protein sequence, read N- to C-terminus: Large ribosomal subunit protein bL17 (178 aa).

The protein belongs to the bacterial ribosomal protein bL17 family. As to quaternary structure, part of the 50S ribosomal subunit. Contacts protein L32.

This Lachnospira eligens (strain ATCC 27750 / DSM 3376 / VPI C15-48 / C15-B4) (Eubacterium eligens) protein is Large ribosomal subunit protein bL17.